Consider the following 105-residue polypeptide: Transcription factor S (105 aa).

Zn(2+)-binding residues include Cys5, Cys8, Cys21, Cys24, Cys66, Cys69, Cys94, and Cys97. Residues 5–24 (CPKCNNIMLPKNGRLKCTVC) form a C4-type zinc finger. The TFIIS-type zinc finger occupies 62 to 102 (TRIECPSCGNMEASWWLQQTRCADEPETRFYKCKKCGHTWR).

It belongs to the archaeal RpoM/eukaryotic RPA12/RPB9/RPC11 RNA polymerase family.

In terms of biological role, induces RNA cleavage activity in the RNA polymerase. In its presence, the cleavage activity of the RNA polymerase truncates the RNA back to position +15 in a stepwise manner by releasing mainly dinucleotides from the 3'-end of the nascent RNA. The truncated RNAs are able to continue elongation. Involved in transcriptional proofreading and fidelity. Misincorporation of nucleotides during elongation of transcription leads to arrested elongation complexes which are rescued by TFS-promoted removal of a dinucleotide from the 3'-end. TFS is able to induce a cleavage resynthesis cycle in stalled elongation complexes (resulting from the next missing nucleotide or a reduced incorporation rate of a wrong nucleotide) preventing misincorporation and enabling proofreading in a post-incorporation manner. Pausing of elongation complexes is the main determinant of TFS-induced RNA cleavage. This chain is Transcription factor S, found in Methanothermococcus thermolithotrophicus (Methanococcus thermolithotrophicus).